The primary structure comprises 129 residues: V-type proton ATPase subunit F 2 (129 aa).

The protein belongs to the V-ATPase F subunit family. V-ATPase is a heteromultimeric enzyme made up of two complexes: the ATP-hydrolytic V1 complex and the proton translocation V0 complex. The V1 complex consists of three catalytic AB heterodimers that form a heterohexamer, three peripheral stalks each consisting of EG heterodimers, one central rotor including subunits D and F, and the regulatory subunits C and H. The proton translocation complex V0 consists of the proton transport subunit a, a ring of proteolipid subunits c9c'', rotary subunit d, subunits e and f, and the accessory subunits VhaAC45 and ATP6AP2.

Functionally, subunit of the V1 complex of vacuolar(H+)-ATPase (V-ATPase), a multisubunit enzyme composed of a peripheral complex (V1) that hydrolyzes ATP and a membrane integral complex (V0) that translocates protons. V-ATPase is responsible for acidifying and maintaining the pH of intracellular compartments and in some cell types, is targeted to the plasma membrane, where it is responsible for acidifying the extracellular environment. This Drosophila melanogaster (Fruit fly) protein is V-type proton ATPase subunit F 2 (Vha14-2).